The primary structure comprises 881 residues: MSQQTTIRKLAELVNTPVEKLLEQLAGAGMKFSGPDQVVTSSEKVKLLGFLRRSHGKPEQAPEESDQSAKKITLNRRKQQEVTVNSGRSKTTVNVEVRQKRTYVKDGARAMTPDEERADILRKLEESRARNLAEQQALAEKDRLRDEAIVRAREEEIAAKERAEAEKKAAEEAAAAAKAAEALAAAKPKRAPIDETAPRPPRTPAAAPAAPRSAPPPPRNDDRNNRSAPRNERGPGDRFAGQMHLSAADRARRGNSNNSNTRGRPGGRNQAGGRRDMSRGGNNAGPHAFERPTAPVVREVAIGDTITVADLAQKLALKGGEVVKALFKMGVMATITQSIDHDTAALVTEELGHKAIRANDNDAEDALLASTGENQGEATQRPPVVTIMGHVDHGKTSLLDYIRRTKVATGEAGGITQHIGAYHVDTPKGVISFLDTPGHAAFTSMRARGAKLTDIVVLVVAADDGVMPQTKEAIQHARSAGVPLIVAINKIDKSDADPMRVKNELLSEQVVAEDFGGDTQMVEISAKTGLGIDDLLDAISIQAELLELKAVDEGRASGVVIESSLDKGRGPVATVLVQQGRLKKGDYLVCGIQYGRVRALFDETGKQPEFAGPSIPVQVLGLSGVPEAGDDFVVVEDERLAKDVAQQRETKRRESRLVATAGSRMEDIMATLGKGEGQQVLNLVIKADVQGSVQALSQALVALSNEDIRINVIHSGVGGITESDANSAAASKATVIGFNVRADASARRIIESNGVDLRYFSIIYDVIDQVKQVASGLLGVEIREEIIGIAEVRDVFRSSKLGAVAGSMVIEGVVRRNKPIRVLRDSVVIFEGELESLRRFKENVEEVRNGTECGIAVKAYNDVKPGDQIECFERIEVPRTL.

2 disordered regions span residues 53-92 and 163-292; these read RSHG…SKTT and AEAE…FERP. Positions 81–92 are enriched in polar residues; that stretch reads EVTVNSGRSKTT. Over residues 172–186 the composition is skewed to low complexity; the sequence is EAAAAAKAAEALAAA. Positions 219–236 are enriched in basic and acidic residues; it reads RNDDRNNRSAPRNERGPG. The span at 254-263 shows a compositional bias: low complexity; the sequence is GNSNNSNTRG. Positions 380 to 549 constitute a tr-type G domain; it reads QRPPVVTIMG…SIQAELLELK (170 aa). A G1 region spans residues 389–396; sequence GHVDHGKT. Residue 389–396 participates in GTP binding; that stretch reads GHVDHGKT. The tract at residues 414 to 418 is G2; that stretch reads GITQH. The segment at 435–438 is G3; sequence DTPG. GTP is bound by residues 435–439 and 489–492; these read DTPGH and NKID. The interval 489 to 492 is G4; that stretch reads NKID. Residues 525–527 are G5; sequence SAK.

Belongs to the TRAFAC class translation factor GTPase superfamily. Classic translation factor GTPase family. IF-2 subfamily.

The protein localises to the cytoplasm. In terms of biological role, one of the essential components for the initiation of protein synthesis. Protects formylmethionyl-tRNA from spontaneous hydrolysis and promotes its binding to the 30S ribosomal subunits. Also involved in the hydrolysis of GTP during the formation of the 70S ribosomal complex. This is Translation initiation factor IF-2 from Stenotrophomonas maltophilia (strain K279a).